Reading from the N-terminus, the 137-residue chain is AVCVSLLGASSIRPLPLHLGQFNNMIKCTIPGSTPWWDFSDYGCYCGYGGSGTPVDQLDRCCQTHDNCYTEAQKFSGCSPYTRKYSYECSEGTLTCKSDNDECAAFVCNCDRSAAICFARAPYNSNNVDIDLEAHCQ.

The first 17 residues, 1–17 (AVCVSLLGASSIRPLPL), serve as a signal peptide directing secretion. 7 cysteine pairs are disulfide-bonded: cysteine 28-cysteine 89, cysteine 44-cysteine 136, cysteine 46-cysteine 62, cysteine 61-cysteine 117, cysteine 68-cysteine 110, cysteine 78-cysteine 103, and cysteine 96-cysteine 108. 3 residues coordinate Ca(2+): tyrosine 45, glycine 47, and glycine 49. Histidine 65 is an active-site residue. Aspartate 66 contributes to the Ca(2+) binding site. The active site involves aspartate 111.

Requires Ca(2+) as cofactor. Expressed by the venom gland.

It localises to the secreted. It carries out the reaction a 1,2-diacyl-sn-glycero-3-phosphocholine + H2O = a 1-acyl-sn-glycero-3-phosphocholine + a fatty acid + H(+). Functionally, snake venom phospholipase A2 (PLA2) that may act in the hemostasis system of the prey. Exhibits hydrolytic activities, and prefers the anionic micelles (dPPC with deoxycholate) (793 umol/mg/min) to the zwitterionic micelles (dPPC with Triton X-100) (591 umol/mg/min). PLA2 catalyzes the calcium-dependent hydrolysis of the 2-acyl groups in 3-sn-phosphoglycerides. In Walterinnesia aegyptia (Desert black snake), this protein is Acidic phospholipase A2 PL-I.